Reading from the N-terminus, the 634-residue chain is DNA-directed RNA polymerase subunit gamma (634 aa).

Zn(2+)-binding residues include C74, C76, C89, and C92. Residues D471, D473, and D475 each coordinate Mg(2+).

This sequence belongs to the RNA polymerase beta' chain family. RpoC1 subfamily. As to quaternary structure, in cyanobacteria the RNAP catalytic core is composed of 2 alpha, 1 beta, 1 beta', 1 gamma and 1 omega subunit. When a sigma factor is associated with the core the holoenzyme is formed, which can initiate transcription. Mg(2+) is required as a cofactor. Zn(2+) serves as cofactor.

The catalysed reaction is RNA(n) + a ribonucleoside 5'-triphosphate = RNA(n+1) + diphosphate. In terms of biological role, DNA-dependent RNA polymerase catalyzes the transcription of DNA into RNA using the four ribonucleoside triphosphates as substrates. This is DNA-directed RNA polymerase subunit gamma from Synechococcus sp. (strain RCC307).